The sequence spans 902 residues: Inter-alpha-trypsin inhibitor heavy chain H1 (902 aa).

Residues 1-28 (MDGTMGLQGLLCLCLASHLALQAMPTQG) form the signal peptide. The region spanning 29-158 (SPTDSTKGNK…KATFQLTYEE (130 aa)) is the VIT domain. S-linked (Hex...) cysteine glycosylation occurs at C52. Residue N69 is glycosylated (N-linked (GlcNAc...) asparagine). S121 bears the Phosphoserine mark. A glycan (N-linked (GlcNAc...) asparagine) is linked at N277. Residues 282–442 (NKNVVFVIDI…WNFLEVRALE (161 aa)) enclose the VWFA domain. A phosphothreonine mark is found at T394 and T399. The segment covering 637-651 (SASQPSPTHPSSSIQ) has biased composition (polar residues). The tract at residues 637-656 (SASQPSPTHPSSSIQKLPDR) is disordered. An O-linked (GalNAc...) serine glycan is attached at S639. An O-linked (GalNAc...) threonine glycan is attached at T644. D663 carries the post-translational modification Aspartate 1-(chondroitin 4-sulfate)-ester. Residues 664 to 902 (PHFIIRVPQK…HTDYIVPDIF (239 aa)) constitute a propeptide that is removed on maturation. Residue N741 is glycosylated (N-linked (GlcNAc...) asparagine).

It belongs to the ITIH family. In terms of assembly, I-alpha-I plasma protease inhibitors are assembled from one or two heavy chains (HC) and one light chain, bikunin. Inter-alpha-inhibitor (I-alpha-I) is composed of ITIH1/HC1, ITIH2/HC2 and bikunin. Interacts with TNFAIP6 (via Link and CUB domains). In terms of processing, heavy chains are linked to bikunin via chondroitin 4-sulfate esterified to the alpha-carboxyl of the C-terminal aspartate after propeptide cleavage. The S-linked glycan is composed of two 6-carbon sugars, possibly Glc or Gal.

The protein resides in the secreted. May act as a carrier of hyaluronan in serum or as a binding protein between hyaluronan and other matrix protein, including those on cell surfaces in tissues to regulate the localization, synthesis and degradation of hyaluronan which are essential to cells undergoing biological processes. The protein is Inter-alpha-trypsin inhibitor heavy chain H1 (ITIH1) of Sus scrofa (Pig).